A 128-amino-acid polypeptide reads, in one-letter code: Ribosome-binding factor A (128 aa).

It belongs to the RbfA family. In terms of assembly, monomer. Binds 30S ribosomal subunits, but not 50S ribosomal subunits or 70S ribosomes.

It is found in the cytoplasm. One of several proteins that assist in the late maturation steps of the functional core of the 30S ribosomal subunit. Associates with free 30S ribosomal subunits (but not with 30S subunits that are part of 70S ribosomes or polysomes). Required for efficient processing of 16S rRNA. May interact with the 5'-terminal helix region of 16S rRNA. This chain is Ribosome-binding factor A, found in Idiomarina loihiensis (strain ATCC BAA-735 / DSM 15497 / L2-TR).